The primary structure comprises 110 residues: Acylphosphatase (110 aa).

The region spanning 20–108 (RAHIFVRGKV…GEFNDFSILP (89 aa)) is the Acylphosphatase-like domain. Catalysis depends on residues Arg-35 and Asn-53.

This sequence belongs to the acylphosphatase family.

The catalysed reaction is an acyl phosphate + H2O = a carboxylate + phosphate + H(+). The chain is Acylphosphatase (acyP) from Pyrobaculum calidifontis (strain DSM 21063 / JCM 11548 / VA1).